A 153-amino-acid chain; its full sequence is Coiled-coil-helix-coiled-coil-helix domain-containing protein 2 (153 aa).

2 disordered regions span residues M1 to R51 and H78 to Q106. Residues P14–R51 are compositionally biased toward low complexity. Residues F113–M153 enclose the CHCH domain. 2 short sequence motifs (cx9C motif) span residues C116–C126 and C136–C146. Intrachain disulfides connect C116–C146 and C126–C136.

As to quaternary structure, interacts with RBPJ.

The protein resides in the nucleus. It localises to the mitochondrion. Its subcellular location is the mitochondrion intermembrane space. Its function is as follows. Transcription factor. Binds to the oxygen responsive element of COX4I2 and activates its transcription under hypoxia conditions (4% oxygen), as well as normoxia conditions (20% oxygen). The protein is Coiled-coil-helix-coiled-coil-helix domain-containing protein 2 (Chchd2) of Mus musculus (Mouse).